The primary structure comprises 494 residues: Transcription termination factor MTERF4, chloroplastic (494 aa).

The N-terminal 54 residues, 1–54 (MMKSLLFSAHPTSLLLPAPRLRRLLRLRAASSASASAPPRADRRSPGTPSRRPS), are a transit peptide targeting the chloroplast. Disordered stretches follow at residues 32–61 (SASA…YARP) and 457–494 (VEEM…EFVR). The segment covering 46–56 (PGTPSRRPSSS) has biased composition (low complexity). 2 stretches are compositionally biased toward acidic residues: residues 457–466 (VEEMEREDSS) and 473–494 (DEVE…EFVR).

It belongs to the mTERF family.

It is found in the plastid. The protein localises to the chloroplast stroma. In terms of biological role, transcription termination factor required for processing and steady-state levels of plastid transcripts. Required for splicing of the chloroplastic group II intron. Required for the accumulation of 16S and 23S ribosomes. The protein is Transcription termination factor MTERF4, chloroplastic of Zea mays (Maize).